Consider the following 499-residue polypeptide: Maturase K (499 aa).

It belongs to the intron maturase 2 family. MatK subfamily.

Its subcellular location is the plastid. The protein resides in the chloroplast. Its function is as follows. Usually encoded in the trnK tRNA gene intron. Probably assists in splicing its own and other chloroplast group II introns. The polypeptide is Maturase K (Gymnocladus dioicus (Kentucky coffee tree)).